Reading from the N-terminus, the 239-residue chain is ATP-dependent dethiobiotin synthetase BioD (239 aa).

15-20 (EIGKTF) is an ATP binding site. Thr-19 contributes to the Mg(2+) binding site. Lys-40 is a catalytic residue. Residues Asp-57, 118 to 121 (EGVG), and 178 to 179 (NH) contribute to the ATP site. 2 residues coordinate Mg(2+): Asp-57 and Glu-118.

It belongs to the dethiobiotin synthetase family. Homodimer. Mg(2+) is required as a cofactor.

The protein localises to the cytoplasm. It catalyses the reaction (7R,8S)-7,8-diammoniononanoate + CO2 + ATP = (4R,5S)-dethiobiotin + ADP + phosphate + 3 H(+). The protein operates within cofactor biosynthesis; biotin biosynthesis; biotin from 7,8-diaminononanoate: step 1/2. In terms of biological role, catalyzes a mechanistically unusual reaction, the ATP-dependent insertion of CO2 between the N7 and N8 nitrogen atoms of 7,8-diaminopelargonic acid (DAPA, also called 7,8-diammoniononanoate) to form a ureido ring. In Burkholderia cenocepacia (strain ATCC BAA-245 / DSM 16553 / LMG 16656 / NCTC 13227 / J2315 / CF5610) (Burkholderia cepacia (strain J2315)), this protein is ATP-dependent dethiobiotin synthetase BioD.